A 350-amino-acid polypeptide reads, in one-letter code: tRNA uridine(34) hydroxylase (350 aa).

A Rhodanese domain is found at 146–240 (DDPDALFIDM…YARKARDQGL (95 aa)). The Cysteine persulfide intermediate role is filled by Cys200.

Belongs to the TrhO family.

It catalyses the reaction uridine(34) in tRNA + AH2 + O2 = 5-hydroxyuridine(34) in tRNA + A + H2O. Functionally, catalyzes oxygen-dependent 5-hydroxyuridine (ho5U) modification at position 34 in tRNAs, the first step in 5-carboxymethoxyuridine (cmo5U) biosynthesis. May be part of an alternate pathway, which is able to bypass cmo5U biogenesis in a subset of tRNAs under aerobic conditions. The protein is tRNA uridine(34) hydroxylase of Escherichia coli O6:K15:H31 (strain 536 / UPEC).